Reading from the N-terminus, the 247-residue chain is ATP synthase subunit a, chloroplastic (247 aa).

A run of 5 helical transmembrane segments spans residues 38–58, 95–115, 134–154, 199–219, and 220–240; these read QVLI…AIAV, VPFI…GALL, INTT…AGLT, LVVV…VMFL, and GLFT…AYIG.

The protein belongs to the ATPase A chain family. As to quaternary structure, F-type ATPases have 2 components, CF(1) - the catalytic core - and CF(0) - the membrane proton channel. CF(1) has five subunits: alpha(3), beta(3), gamma(1), delta(1), epsilon(1). CF(0) has four main subunits: a, b, b' and c.

It is found in the plastid. It localises to the chloroplast thylakoid membrane. Its function is as follows. Key component of the proton channel; it plays a direct role in the translocation of protons across the membrane. The polypeptide is ATP synthase subunit a, chloroplastic (Illicium oligandrum (Star anise)).